We begin with the raw amino-acid sequence, 137 residues long: Proline-rich protein 13 (137 aa).

2 disordered regions span residues 26 to 54 (PPPL…PCRP) and 94 to 137 (VGPG…SDSD). Residues 103–124 (KTRKKMKKAHKKSHKHHKHGKH) show a composition bias toward basic residues. The segment covering 125–137 (SSSSSSSSSSDSD) has biased composition (low complexity).

It is found in the nucleus. Functionally, negatively regulates TSP1 expression at the level of transcription. This down-regulation was shown to reduce taxane-induced apoptosis. The sequence is that of Proline-rich protein 13 (Prr13) from Mus musculus (Mouse).